A 308-amino-acid chain; its full sequence is Zinc transporter ZIP9 (308 aa).

Residues 4–24 form a helical membrane-spanning segment; the sequence is FLSISLLSVAMLVGCYVAGII. Asparagine 29 carries N-linked (GlcNAc...) asparagine glycosylation. A run of 5 helical transmembrane segments spans residues 35-55, 107-127, 147-167, 177-197, and 211-231; these read LKLV…AVIV, AYIG…DQIG, ITTT…LGAA, LIVF…LVSF, and HLLV…LGLS. Asparagine 242 carries N-linked (GlcNAc...) asparagine glycosylation. 2 helical membrane-spanning segments follow: residues 245–265 and 287–307; these read GVAM…HVLP and LEVA…IGHQ.

It belongs to the ZIP transporter (TC 2.A.5) family.

It localises to the golgi apparatus. Its subcellular location is the trans-Golgi network membrane. It is found in the cell membrane. The protein resides in the cytoplasm. The protein localises to the perinuclear region. It localises to the mitochondrion. Its subcellular location is the nucleus. It catalyses the reaction Zn(2+)(in) = Zn(2+)(out). Its function is as follows. Transports zinc ions across cell and organelle membranes into the cytoplasm and regulates intracellular zinc homeostasis. Participates in the zinc ions efflux out of the secretory compartments. Regulates intracellular zinc level, resulting in the enhancement of AKT1 and MAPK3/MAPK1 (Erk1/2) phosphorylation in response to the BCR activation. Also functions as a membrane androgen receptor that mediates, through a G protein, the non-classical androgen signaling pathway, characterized by the activation of MAPK3/MAPK1 (Erk1/2) and transcription factors CREB1 or ATF1. This pathway contributes to CLDN1 and CLDN5 expression and tight junction formation between adjacent Sertoli cells. Mediates androgen-induced vascular endothelial cell proliferation through activation of an inhibitory G protein leading to the AKT1 and MAPK3/MAPK1 (Erk1/2) activation which in turn modulate inhibition (phosphorylation) of GSK3B and CCND1 transcription. Moreover, has dual functions as a membrane-bound androgen receptor and as an androgen-dependent zinc transporter both of which are mediated through an inhibitory G protein (Gi) that mediates both MAP kinase and zinc signaling leading to the androgen-dependent apoptotic process. The chain is Zinc transporter ZIP9 from Mus musculus (Mouse).